The chain runs to 154 residues: SsrA-binding protein (154 aa).

Belongs to the SmpB family.

The protein resides in the cytoplasm. In terms of biological role, required for rescue of stalled ribosomes mediated by trans-translation. Binds to transfer-messenger RNA (tmRNA), required for stable association of tmRNA with ribosomes. tmRNA and SmpB together mimic tRNA shape, replacing the anticodon stem-loop with SmpB. tmRNA is encoded by the ssrA gene; the 2 termini fold to resemble tRNA(Ala) and it encodes a 'tag peptide', a short internal open reading frame. During trans-translation Ala-aminoacylated tmRNA acts like a tRNA, entering the A-site of stalled ribosomes, displacing the stalled mRNA. The ribosome then switches to translate the ORF on the tmRNA; the nascent peptide is terminated with the 'tag peptide' encoded by the tmRNA and targeted for degradation. The ribosome is freed to recommence translation, which seems to be the essential function of trans-translation. The polypeptide is SsrA-binding protein (Synechococcus sp. (strain JA-3-3Ab) (Cyanobacteria bacterium Yellowstone A-Prime)).